The following is a 417-amino-acid chain: Fatty-acid peroxygenase (417 aa).

Cys-363 is a binding site for heme.

The protein belongs to the cytochrome P450 family. Heme is required as a cofactor.

The catalysed reaction is a 1,2-saturated fatty acid + H2O2 = a 2-hydroxy fatty acid + H2O. It catalyses the reaction a 2,3-saturated fatty acid + H2O2 = a 3-hydroxy fatty acid + H2O. It carries out the reaction tetradecanoate + H2O2 = (3R)-hydroxytetradecanoate + H2O. The enzyme catalyses tetradecanoate + H2O2 = (2R)-hydroxytetradecanoate + H2O. The catalysed reaction is tetradecanoate + H2O2 = (2S)-hydroxytetradecanoate + H2O. In terms of biological role, catalyzes the alpha- and beta-hydroxylation of myristic acid in the presence of hydrogen peroxide. The protein is Fatty-acid peroxygenase (cypC) of Bacillus subtilis (strain 168).